A 740-amino-acid polypeptide reads, in one-letter code: ATP-dependent DNA helicase Hel308 (740 aa).

ATP is bound by residues Gln-28 and Ile-46 to Thr-53. The region spanning Arg-33–Glu-204 is the Helicase ATP-binding domain. Positions Asp-149–His-152 match the DEAH box motif. Positions Glu-236–Ser-436 constitute a Helicase C-terminal domain. Residues Val-716–Gly-740 are disordered. Polar residues predominate over residues Gln-726 to Gly-740.

The protein belongs to the helicase family. Hel308 subfamily. As to quaternary structure, monomer.

It carries out the reaction Couples ATP hydrolysis with the unwinding of duplex DNA by translocating in the 3'-5' direction.. The enzyme catalyses ATP + H2O = ADP + phosphate + H(+). DNA-dependent ATPase and 3'-5' DNA helicase that may be involved in repair of stalled replication forks. This chain is ATP-dependent DNA helicase Hel308, found in Methanocella arvoryzae (strain DSM 22066 / NBRC 105507 / MRE50).